A 260-amino-acid polypeptide reads, in one-letter code: MIFKILCSLLLVTSNFASALYVNETTSYTPYTKTLTPTYSVSPQETTLTYSDETTTFYITSTFYSTYWFTTSQSAAIISTPTASTPTASTPSLTTSTNEYTTTYSDTDTTYTSTLTSTYIITLSTESANEKAEQISTSVTEIASTVTESGSTYTSTLTSTLLVTVYNSQASNTIATSTAGDAASNVDALEKLVSAEHQSQMIQTTSADEQYCSASTKYVTVTAAAVTEVVTTTAEPVVKYVTITADASNVTGSANNGTHI.

The first 19 residues, M1–A19, serve as a signal peptide directing secretion. Residues N23, N249, and N256 are each glycosylated (N-linked (GlcNAc...) asparagine).

Required for vanadate resistance. The protein is Protein SVS1 (SVS1) of Saccharomyces cerevisiae (strain ATCC 204508 / S288c) (Baker's yeast).